The chain runs to 143 residues: Nucleoside diphosphate kinase (143 aa).

ATP contacts are provided by lysine 11, phenylalanine 59, arginine 87, threonine 93, arginine 104, and asparagine 114. The active-site Pros-phosphohistidine intermediate is the histidine 117.

This sequence belongs to the NDK family. Homotetramer. The cofactor is Mg(2+).

It localises to the cytoplasm. It carries out the reaction a 2'-deoxyribonucleoside 5'-diphosphate + ATP = a 2'-deoxyribonucleoside 5'-triphosphate + ADP. The catalysed reaction is a ribonucleoside 5'-diphosphate + ATP = a ribonucleoside 5'-triphosphate + ADP. Its function is as follows. Major role in the synthesis of nucleoside triphosphates other than ATP. The ATP gamma phosphate is transferred to the NDP beta phosphate via a ping-pong mechanism, using a phosphorylated active-site intermediate. This chain is Nucleoside diphosphate kinase, found in Idiomarina loihiensis (strain ATCC BAA-735 / DSM 15497 / L2-TR).